The chain runs to 290 residues: uncharacterized protein (290 aa).

Disordered stretches follow at residues 89-157 (CSEN…EELS), 172-217 (MANT…MESS), and 261-290 (TANTPPTVVHVSKPSSETSVSIPPSSAVKK). Composition is skewed to basic and acidic residues over residues 106–124 (DFSKTTVDETIKEKSEKQP) and 142–152 (KTEKLVSKEPS). Polar residues-rich tracts occupy residues 172–183 (MANTSSSANRTG) and 193–202 (KPTTAVQAST). Composition is skewed to low complexity over residues 207–217 (MSSAESAMESS) and 274–290 (PSSETSVSIPPSSAVKK).

This is an uncharacterized protein from Caenorhabditis elegans.